The chain runs to 214 residues: Thymidylate kinase (214 aa).

ATP is bound at residue 10-17 (GPDGAGKT).

The protein belongs to the thymidylate kinase family.

The enzyme catalyses dTMP + ATP = dTDP + ADP. Phosphorylation of dTMP to form dTDP in both de novo and salvage pathways of dTTP synthesis. The polypeptide is Thymidylate kinase (Lacticaseibacillus casei (strain BL23) (Lactobacillus casei)).